The sequence spans 331 residues: MKQTVYTASPESQQIHVWSLEADGKLTLVQVVDAPGQVQPMVVSPNKEFLYVGVRPEFRVLAYRITPDNGALTFAGEAALPGSPTHISTDHHGRFVFSASYNQGCVSVTPLHDGLPGETITVVEGLEGCHSANISPDNRTLWVPALKQDRICLFTLSDDGFLSAQEPAEVTTVEGAGPRHMVFHPNQQYGYCVNELNSSIDVWELKDPKGNIECVQTLDMMPPDFSGVRWAADIHITPDGGHLYACDRTASIITVFSVSEDGSVLAVEGYQPTETQPRGFNLDHSGKYLIAAGQKSHHIAVYDIVGEQGLLQEKGRYAVGQGPMWVVVNAH.

It belongs to the cycloisomerase 2 family.

The enzyme catalyses 6-phospho-D-glucono-1,5-lactone + H2O = 6-phospho-D-gluconate + H(+). It functions in the pathway carbohydrate degradation; pentose phosphate pathway; D-ribulose 5-phosphate from D-glucose 6-phosphate (oxidative stage): step 2/3. Functionally, catalyzes the hydrolysis of 6-phosphogluconolactone to 6-phosphogluconate. The sequence is that of 6-phosphogluconolactonase from Klebsiella pneumoniae subsp. pneumoniae (strain ATCC 700721 / MGH 78578).